The chain runs to 404 residues: Cytoplasmic 60S subunit biogenesis factor REI1 homolog 1 (404 aa).

C2H2-type zinc fingers lie at residues L4–H28 and Y68–H92. Positions Q119–D169 are disordered. Acidic residues-rich tracts occupy residues D125–S147 and S160–D169. C2H2-type zinc fingers lie at residues T178–H201 and F229–H256.

Belongs to the REI1 family. As to quaternary structure, can form homodimer. Interacts with RLP24, RPL24A, RPL24B, EBP1 and JJJ1.

The protein localises to the cytoplasm. Pre-60S-associated factor involved in the cytoplasmic maturation of the 60S subunit. Involved in the dissociation and recycling of other late pre-60S factors before newly synthesized large ribosomal subunits enter translation. Can complement the growth defect of a yeast mutant lacking REI1. Required for leaf growth under cold temperature conditions. In Arabidopsis thaliana (Mouse-ear cress), this protein is Cytoplasmic 60S subunit biogenesis factor REI1 homolog 1.